A 400-amino-acid polypeptide reads, in one-letter code: DNA primase large subunit PriL (400 aa).

4 residues coordinate [4Fe-4S] cluster: C247, C356, C367, and C373.

Belongs to the eukaryotic-type primase large subunit family. Heterodimer of a small subunit (PriS) and a large subunit (PriL). [4Fe-4S] cluster is required as a cofactor.

Functionally, regulatory subunit of DNA primase, an RNA polymerase that catalyzes the synthesis of short RNA molecules used as primers for DNA polymerase during DNA replication. Stabilizes and modulates the activity of the small subunit, increasing the rate of DNA synthesis, and conferring RNA synthesis capability. The DNA polymerase activity may enable DNA primase to also catalyze primer extension after primer synthesis. May also play a role in DNA repair. The protein is DNA primase large subunit PriL of Thermococcus kodakarensis (strain ATCC BAA-918 / JCM 12380 / KOD1) (Pyrococcus kodakaraensis (strain KOD1)).